The chain runs to 148 residues: SUMO-conjugating enzyme UBC9 (148 aa).

Residues 1-147 (MASKRILKEL…ARTWTQKYAM (147 aa)) form the UBC core domain. The active-site Glycyl thioester intermediate is Cys-85.

It belongs to the ubiquitin-conjugating enzyme family. Interacts with CHIP. Highest expression in young stems and old leaves. Lowest levels in floral buds, anthers and young leaves.

It functions in the pathway protein modification; protein sumoylation. Functionally, accepts the ubiquitin-like protein SUMO/SMT3 from the E1 complex and catalyzes its covalent attachment to other proteins. Mediates the selective degradation of short-lived and abnormal proteins. The polypeptide is SUMO-conjugating enzyme UBC9 (UBC9) (Arabidopsis thaliana (Mouse-ear cress)).